The chain runs to 208 residues: uncharacterized protein (208 aa).

Positions 1 to 16 (MTRVALLTTGRELSQA) are cleaved as a signal peptide. Disordered stretches follow at residues 1-95 (MTRV…VRGQ) and 145-176 (RVTK…SAAD). Low complexity predominate over residues 16 to 25 (AAPPARARTP). Positions 32–43 (RGERPDDGGHAP) are enriched in basic and acidic residues. Residues 44–54 (HRDRRVNQRRR) are compositionally biased toward basic residues. Positions 55 to 95 (QVGDRRAQRGVDEHPWRRPDERPNDHLPQRNSERPEGVRGQ) are enriched in basic and acidic residues. Composition is skewed to polar residues over residues 148–158 (KVSSSGPNSTP) and 167–176 (GTNNAPSAAD).

This is an uncharacterized protein from Mycobacterium tuberculosis (strain CDC 1551 / Oshkosh).